A 573-amino-acid polypeptide reads, in one-letter code: Estrogen receptor beta (573 aa).

Residues 15–170 (QEVDSSKVGE…CFAGKGDMHF (156 aa)) form a modulating region. 2 NR C4-type zinc fingers span residues 171–191 (CAVC…CEGC) and 207–231 (CPAT…LRKC). Residues 171-236 (CAVCHDYASG…RLRKCYEVGM (66 aa)) constitute a DNA-binding region (nuclear receptor). Residues 291–527 (TPEQLINRII…DLLLEMLDAN (237 aa)) form the NR LBD domain. 2 stretches are compositionally biased toward low complexity: residues 534-552 (MSAS…AQSQ) and 559-573 (CSGE…SSTI). A disordered region spans residues 534-573 (MSASYSSQPSPWSQAAQSQPGPPPSCSGECPCPPKESSTI).

The protein belongs to the nuclear hormone receptor family. NR3 subfamily. In terms of assembly, binds DNA as a homodimer. Can form a heterodimer with ER-alpha. In terms of tissue distribution, liver.

Its subcellular location is the nucleus. Its function is as follows. Binds estrogens with an affinity similar to that of ER-alpha, and activates expression of reporter genes containing estrogen response elements (ERE) in an estrogen-dependent manner. This Anguilla japonica (Japanese eel) protein is Estrogen receptor beta (esr2).